The chain runs to 313 residues: Protein FixB (313 aa).

Leucine 255–aspartate 283 lines the FAD pocket.

It belongs to the ETF alpha-subunit/FixB family. Heterodimer of FixA and FixB.

It participates in amine and polyamine metabolism; carnitine metabolism. Functionally, required for anaerobic carnitine reduction. May bring reductant to CaiA. The polypeptide is Protein FixB (Escherichia coli O8 (strain IAI1)).